Consider the following 362-residue polypeptide: Outer membrane porin F (362 aa).

The first 22 residues, 1-22 (MMKRNILAVIVPALLVAGTANA), serve as a signal peptide directing secretion.

The protein belongs to the Gram-negative porin family. As to quaternary structure, homotrimer. Forms mixed heterotrimers with OmpC; other mixed heterotrimers are also probable.

The protein localises to the cell outer membrane. Forms pores that allow passive diffusion of small molecules across the outer membrane. Its function is as follows. (Microbial infection) Is the major receptor for colicin E5. In terms of biological role, (Microbial infection) A mixed OmpC-OmpF heterotrimer is the outer membrane receptor for toxin CdiA-EC536. The polypeptide is Outer membrane porin F (ompF) (Escherichia coli O6:K15:H31 (strain 536 / UPEC)).